We begin with the raw amino-acid sequence, 322 residues long: Pre-mRNA-splicing factor NTR2 (322 aa).

A disordered region spans residues 1–30; that stretch reads MAIKKRNKIRLPSGSPEEVGIDGSAHKPMQ. Residue Ser40 is modified to Phosphoserine. The interval 113–137 is disordered; sequence LLSDSSEAGSSSEGEHISSIPTRGE. Over residues 115-132 the composition is skewed to low complexity; the sequence is SDSSEAGSSSEGEHISSI. A phosphoserine mark is found at Ser153 and Ser197.

Component of the NTR complex (NTC-related complex), composed of NTR1, NTR2 and PRP43. Interacts with CLF1, NTR1 and PRP43.

The protein localises to the cytoplasm. It localises to the nucleus. Involved in pre-mRNA splicing and spliceosome disassembly. Promotes release of excised lariat intron from the spliceosome by acting as a receptor for PRP43. This targeting of PRP43 leads to disassembly of the spliceosome with the separation of the U2, U5, U6 snRNPs and the NTC complex. In Saccharomyces cerevisiae (strain ATCC 204508 / S288c) (Baker's yeast), this protein is Pre-mRNA-splicing factor NTR2 (NTR2).